Here is a 370-residue protein sequence, read N- to C-terminus: Probable G-protein coupled receptor 85 (370 aa).

At 1-25 the chain is on the extracellular side; that stretch reads MANYSHAADNILQNLSPLTAFLKLT. A glycan (N-linked (GlcNAc...) asparagine) is linked at N3. Residues 26 to 46 traverse the membrane as a helical segment; sequence SLGFIIGVSVVGNLLISILLA. Residues 47–57 are Cytoplasmic-facing; the sequence is KDKTLHRAPYY. The helical transmembrane segment at 58-78 threads the bilayer; sequence FLLDLCCSDILRSAICFPFVF. The Extracellular portion of the chain corresponds to 79 to 96; it reads NSVKNGSTWTYGTLTCKV. An N-linked (GlcNAc...) asparagine glycan is attached at N83. C94 and C172 are joined by a disulfide. Residues 97–117 traverse the membrane as a helical segment; sequence IAFLGVLSCFHTAFMLFCISV. The Cytoplasmic segment spans residues 118 to 137; it reads TRYLAIAHHRFYTKRLTFWT. A helical transmembrane segment spans residues 138-158; it reads CLAVICMVWTLSVAMAFPPVL. At 159 to 188 the chain is on the extracellular side; that stretch reads DVGTYSFIREEDQCTFQHRSFRANDSLGFM. Residue N182 is glycosylated (N-linked (GlcNAc...) asparagine). Residues 189-209 traverse the membrane as a helical segment; sequence LLLALILLATQLVYLKLIFFV. Over 210-286 the chain is Cytoplasmic; the sequence is HDRRKMKPVQ…FKMEKRISRM (77 aa). A helical membrane pass occupies residues 287 to 307; it reads FYIMTFLFLTLWGPYLVACYW. The Extracellular segment spans residues 308-313; that stretch reads RVFARG. The chain crosses the membrane as a helical span at residues 314 to 334; sequence PVVPGGFLTAAVWMSFAQAGI. Residues 335–370 lie on the Cytoplasmic side of the membrane; that stretch reads NPFVCIFSNRELRRCFSTTLLYCRKSRLPREPYCVI.

This sequence belongs to the G-protein coupled receptor 1 family. In terms of assembly, interacts with DLG4 and DLG3.

The protein localises to the cell membrane. The protein resides in the endoplasmic reticulum. In terms of biological role, orphan receptor. In Pongo abelii (Sumatran orangutan), this protein is Probable G-protein coupled receptor 85 (GPR85).